The primary structure comprises 377 residues: uncharacterized protein (377 aa).

32–39 (GPINSGKT) is a binding site for ATP.

Belongs to the archaeal ATPase family.

This is an uncharacterized protein from Methanocaldococcus jannaschii (strain ATCC 43067 / DSM 2661 / JAL-1 / JCM 10045 / NBRC 100440) (Methanococcus jannaschii).